Reading from the N-terminus, the 255-residue chain is Staphylococcal secretory antigen ssaA1 (255 aa).

Positions 1–26 are cleaved as a signal peptide; the sequence is MKKIVTATIATAGLATIAFAGHDAQA. 3 tandem repeats follow at residues 75–78, 88–91, and 98–101. The 3 X 4 AA repeats of Y-N-N-Y stretch occupies residues 75–101; sequence YNNYNTYSYNNASYNNYYNHSYQYNNY. Positions 134–255 constitute a Peptidase C51 domain; sequence AAPSSNGRSI…NQAGSYNFIH (122 aa).

The protein localises to the secreted. Its function is as follows. Not known; immunogenic protein. This is Staphylococcal secretory antigen ssaA1 (ssaA1) from Staphylococcus aureus (strain MW2).